The chain runs to 156 residues: Small ribosomal subunit protein uS7 (156 aa).

As to quaternary structure, part of the 30S ribosomal subunit. Contacts proteins S9 and S11. Binds to the C-terminus of IF3 and to the C-terminus of Era.

In terms of biological role, one of the primary rRNA binding proteins, it binds directly to 3'-end of the 16S rRNA where it nucleates assembly of the head domain of the 30S subunit. Is located at the subunit interface close to the decoding center. Binds mRNA and the E site tRNA blocking its exit path in the ribosome. This blockage implies that this section of the ribosome must be able to move to release the deacetylated tRNA. This is Small ribosomal subunit protein uS7 (rpsG) from Thermus thermophilus (strain ATCC 27634 / DSM 579 / HB8).